A 425-amino-acid chain; its full sequence is Adenylosuccinate synthetase (425 aa).

GTP contacts are provided by residues 12 to 18 and 40 to 42; these read GDEGKGK and GHT. D13 functions as the Proton acceptor in the catalytic mechanism. The Mg(2+) site is built by D13 and G40. IMP-binding positions include 13–16, 38–41, T130, R144, Q224, T239, and R301; these read DEGK and NAGH. H41 (proton donor) is an active-site residue. Position 297–303 (297–303) interacts with substrate; sequence TVSNRRR. GTP is bound by residues R303, 329–331, and 411–413; these read KLD and STS.

It belongs to the adenylosuccinate synthetase family. As to quaternary structure, homodimer. Requires Mg(2+) as cofactor.

It localises to the cytoplasm. It catalyses the reaction IMP + L-aspartate + GTP = N(6)-(1,2-dicarboxyethyl)-AMP + GDP + phosphate + 2 H(+). Its pathway is purine metabolism; AMP biosynthesis via de novo pathway; AMP from IMP: step 1/2. In terms of biological role, plays an important role in the de novo pathway of purine nucleotide biosynthesis. Catalyzes the first committed step in the biosynthesis of AMP from IMP. This is Adenylosuccinate synthetase from Wolbachia pipientis wMel.